We begin with the raw amino-acid sequence, 337 residues long: RAD51-associated protein 1 (337 aa).

Disordered regions lie at residues 1–69 (MVRP…PPKK) and 88–337 (LSVK…SQVR). A phosphoserine mark is found at S19 and S23. Residues 28 to 38 (ISSSTPVNKSK) show a composition bias toward polar residues. Positions 32–50 (TPVNKSKTVPKVLKQDKPK) are interaction with DNA. The span at 44-69 (LKQDKPKPNLKNLQKEEVLPTEPPKK) shows a compositional bias: basic and acidic residues. Phosphoserine is present on residues S103 and S107. The segment covering 105–118 (EKSTDKQGKEKTEN) has biased composition (basic and acidic residues). The short motif at 138–143 (LDKITE) is the SIM motif element. Acidic residues predominate over residues 190–205 (SESDPDFDESKESDED). Residues 225-286 (GEKKERKSKP…PSAESKRPKW (62 aa)) are interaction with DNA. A Glycyl lysine isopeptide (Lys-Gly) (interchain with G-Cter in SUMO; alternate) cross-link involves residue K251. A Glycyl lysine isopeptide (Lys-Gly) (interchain with G-Cter in ubiquitin; alternate) cross-link involves residue K251. The WVPP motif signature appears at 286-289 (WVPP). Over residues 290 to 304 (AASGSRNSSSNALAG) the composition is skewed to low complexity. The segment at 295 to 334 (RNSSSNALAGTPAKSPSQSLRLGLSRLAPVKRLHPSATSS) is interaction with RAD51. Position 309 is a phosphoserine (S309).

In terms of assembly, monomer; elongated monodisperse monomer. Interacts (via C-terminal region) with RAD51; the interaction is direct. Interacts (via SIM motif) with WDR48/UAF1; WDR48/UAF1 and RAD51AP1 cooperate together to stimulate RAD51-mediated homologous recombination (HR). Interacts (via WVPP motif) with DMC1; the interaction is direct. Interacts with PALB2. Interacts with RAD52. In terms of processing, sumoylation with SUMO2/3 by NSMCE2/MMS21 promotes stabilization, possibly by preventing ubiquitination. In terms of tissue distribution, most abundantly expressed in testis. Also expressed in spleen, thymus and bone marrow. Not detected in heart, kidney or liver.

The protein localises to the chromosome. It localises to the nucleus. It is found in the telomere. In terms of biological role, structure-specific DNA-binding protein involved in DNA repair by promoting RAD51-mediated homologous recombination. Acts by stimulating D-Loop formation by RAD51: specifically enhances joint molecule formation through its structure-specific DNA interaction and its interaction with RAD51. Binds single-stranded DNA (ssDNA), double-stranded DNA (dsDNA) and secondary DNA structures, such as D-loop structures: has a strong preference for branched-DNA structures that are obligatory intermediates during joint molecule formation. Cooperates with WDR48/UAF1 to stimulate RAD51-mediated homologous recombination: both WDR48/UAF1 and RAD51AP1 have coordinated role in DNA-binding during homologous recombination and DNA repair. WDR48/UAF1 and RAD51AP1 also have a coordinated role in DNA-binding to promote USP1-mediated deubiquitination of FANCD2. Also involved in meiosis by promoting DMC1-mediated homologous meiotic recombination. The sequence is that of RAD51-associated protein 1 from Mus musculus (Mouse).